Consider the following 382-residue polypeptide: Galactokinase (382 aa).

34–37 (EHTD) contacts substrate. 124–130 (GAGLSSS) is a binding site for ATP. Residues Ser130 and Glu162 each contribute to the Mg(2+) site. The active-site Proton acceptor is Asp174. Residue Tyr223 coordinates substrate.

This sequence belongs to the GHMP kinase family. GalK subfamily.

The protein localises to the cytoplasm. It carries out the reaction alpha-D-galactose + ATP = alpha-D-galactose 1-phosphate + ADP + H(+). Its pathway is carbohydrate metabolism; galactose metabolism. Functionally, catalyzes the transfer of the gamma-phosphate of ATP to D-galactose to form alpha-D-galactose-1-phosphate (Gal-1-P). This is Galactokinase from Erwinia tasmaniensis (strain DSM 17950 / CFBP 7177 / CIP 109463 / NCPPB 4357 / Et1/99).